The primary structure comprises 218 residues: MSKPRIKLKLPDNADKLLLHSCCAPCSGEVMETLLYSGIDYSIFFYNPNIHPVKEYLIRKEENIRFAEKHNIPFIDCDYDTDNWFERAKGMENEPEKGIRCTMCFDMRFERAALYAYENGFKVFSSSLGISRWKNMEQINDCGIRAASHYPDIHYWDYNWRKNGGATRMLEISKREEFYQQEYCGCVYSLRDTNRWRMSQGRDRIQLGVKFYSASDPD.

4 residues coordinate [4Fe-4S] cluster: C22, C23, C101, and C104. The cysteines at positions 184 and 186 are disulfide-linked.

It belongs to the QueH family.

It catalyses the reaction epoxyqueuosine(34) in tRNA + AH2 = queuosine(34) in tRNA + A + H2O. Its pathway is tRNA modification; tRNA-queuosine biosynthesis. Its function is as follows. Catalyzes the conversion of epoxyqueuosine (oQ) to queuosine (Q), which is a hypermodified base found in the wobble positions of tRNA(Asp), tRNA(Asn), tRNA(His) and tRNA(Tyr). This chain is Epoxyqueuosine reductase QueH, found in Acinetobacter baylyi (strain ATCC 33305 / BD413 / ADP1).